Consider the following 367-residue polypeptide: Peptide chain release factor 2 (367 aa).

An N5-methylglutamine modification is found at Q249.

It belongs to the prokaryotic/mitochondrial release factor family. Methylated by PrmC. Methylation increases the termination efficiency of RF2.

The protein resides in the cytoplasm. Peptide chain release factor 2 directs the termination of translation in response to the peptide chain termination codons UGA and UAA. The polypeptide is Peptide chain release factor 2 (Thermotoga petrophila (strain ATCC BAA-488 / DSM 13995 / JCM 10881 / RKU-1)).